Consider the following 157-residue polypeptide: uncharacterized protein (157 aa).

Positions 9 to 154 constitute an N-acetyltransferase domain; the sequence is LLINYKTLDE…ETNLNAVTNE (146 aa).

This is an uncharacterized protein from Bacillus cereus (strain B4264).